The chain runs to 360 residues: MTATLERREGVSLWERFCAWITSTENRLYIGWFGCLMFPTLLTATSCYIIAFIAAPPVDIDGIREPVAGSLLYGNNIISGAVIPSSNAIGMHFYPIWEAASIDEWLYNGGPYQLIVLHFLLGVASYMGREWELSYRLGMRPWIFVAFSAPVAAASAVFLVYPIGQGSFSDGMPLGISGTFNFMLVFQAEHNILMHPFHMAGVAGVFGGSLFSAMHGSLVTSSLIRETTENESTNYGYKFGQEEETYNIVAAHGYFGRLIFQYASFNNSRALHFFLAAWPVVGIWLTAMGVSTMAFNLNGFNFNQSVVDSQGRVINTWADIINRADLGMEVMHERNAHNFPLDLASGDVLPVALNAPAVNG.

Transmembrane regions (helical) follow at residues 29 to 46, 118 to 133, and 142 to 156; these read YIGW…TATS, HFLL…EWEL, and WIFV…AASA. A chlorophyll a-binding site is contributed by histidine 118. Tyrosine 126 contacts pheophytin a. Aspartate 170 and glutamate 189 together coordinate [CaMn4O5] cluster. Residues 197 to 218 form a helical membrane-spanning segment; it reads FHMAGVAGVFGGSLFSAMHGSL. Histidine 198 contributes to the chlorophyll a binding site. Residues histidine 215 and 264–265 each bind a quinone; that span reads SF. A Fe cation-binding site is contributed by histidine 215. Fe cation is bound at residue histidine 272. A helical membrane pass occupies residues 274–288; it reads FLAAWPVVGIWLTAM. Histidine 332, glutamate 333, aspartate 342, and alanine 344 together coordinate [CaMn4O5] cluster. Positions 345-360 are excised as a propeptide; that stretch reads SGDVLPVALNAPAVNG.

Belongs to the reaction center PufL/M/PsbA/D family. PSII is composed of 1 copy each of membrane proteins PsbA, PsbB, PsbC, PsbD, PsbE, PsbF, PsbH, PsbI, PsbJ, PsbK, PsbL, PsbM, PsbT, PsbX, PsbY, PsbZ, Psb30/Ycf12, at least 3 peripheral proteins of the oxygen-evolving complex and a large number of cofactors. It forms dimeric complexes. The D1/D2 heterodimer binds P680, chlorophylls that are the primary electron donor of PSII, and subsequent electron acceptors. It shares a non-heme iron and each subunit binds pheophytin, quinone, additional chlorophylls, carotenoids and lipids. D1 provides most of the ligands for the Mn4-Ca-O5 cluster of the oxygen-evolving complex (OEC). There is also a Cl(-1) ion associated with D1 and D2, which is required for oxygen evolution. The PSII complex binds additional chlorophylls, carotenoids and specific lipids. is required as a cofactor. In terms of processing, tyr-161 forms a radical intermediate that is referred to as redox-active TyrZ, YZ or Y-Z. Post-translationally, C-terminally processed by CTPA; processing is essential to allow assembly of the oxygen-evolving complex and thus photosynthetic growth.

Its subcellular location is the plastid. It localises to the chloroplast thylakoid membrane. The enzyme catalyses 2 a plastoquinone + 4 hnu + 2 H2O = 2 a plastoquinol + O2. Its function is as follows. Photosystem II (PSII) is a light-driven water:plastoquinone oxidoreductase that uses light energy to abstract electrons from H(2)O, generating O(2) and a proton gradient subsequently used for ATP formation. It consists of a core antenna complex that captures photons, and an electron transfer chain that converts photonic excitation into a charge separation. The D1/D2 (PsbA/PsbD) reaction center heterodimer binds P680, the primary electron donor of PSII as well as several subsequent electron acceptors. This chain is Photosystem II protein D1, found in Trieres chinensis (Marine centric diatom).